Here is a 697-residue protein sequence, read N- to C-terminus: Elongation factor G (697 aa).

One can recognise a tr-type G domain in the interval 10 to 290 (THFRNIGIAA…AVVDYLPSPL (281 aa)). Residues 19 to 26 (AHIDAGKT), 89 to 93 (DTPGH), and 143 to 146 (NKMD) contribute to the GTP site.

Belongs to the TRAFAC class translation factor GTPase superfamily. Classic translation factor GTPase family. EF-G/EF-2 subfamily.

The protein resides in the cytoplasm. Catalyzes the GTP-dependent ribosomal translocation step during translation elongation. During this step, the ribosome changes from the pre-translocational (PRE) to the post-translocational (POST) state as the newly formed A-site-bound peptidyl-tRNA and P-site-bound deacylated tRNA move to the P and E sites, respectively. Catalyzes the coordinated movement of the two tRNA molecules, the mRNA and conformational changes in the ribosome. The sequence is that of Elongation factor G from Deinococcus deserti (strain DSM 17065 / CIP 109153 / LMG 22923 / VCD115).